We begin with the raw amino-acid sequence, 399 residues long: Mannan endo-1,4-beta-mannosidase 4 (399 aa).

Positions 1–26 (MNNSIILIFVAILIIFPNEFSKPTRA) are cleaved as a signal peptide. Residues Trp-88 and Asn-203 each contribute to the substrate site. The Proton donor role is filled by Glu-204. Residue Tyr-279 participates in substrate binding. The active-site Nucleophile is Glu-318. The cysteines at positions 347 and 354 are disulfide-linked. A substrate-binding site is contributed by Trp-360.

Belongs to the glycosyl hydrolase 5 (cellulase A) family. Expressed in flowers and fruit pericarp.

The protein resides in the secreted. It carries out the reaction Random hydrolysis of (1-&gt;4)-beta-D-mannosidic linkages in mannans, galactomannans and glucomannans.. Functionally, possesses endo-beta-mannanase and mannan transglycosylase activities. May be involved in cell wall degradation during fruit ripening. This is Mannan endo-1,4-beta-mannosidase 4 (MAN4) from Solanum lycopersicum (Tomato).